A 591-amino-acid polypeptide reads, in one-letter code: Aspartate--tRNA ligase (591 aa).

Glu-174 lines the L-aspartate pocket. An aspartate region spans residues 198 to 201 (QLFK). Position 220 (Arg-220) interacts with L-aspartate. Residues 220-222 (RDE) and Gln-229 contribute to the ATP site. Position 450 (His-450) interacts with L-aspartate. Glu-486 serves as a coordination point for ATP. Residue Arg-493 coordinates L-aspartate. Position 538–541 (538–541 (GLDR)) interacts with ATP.

It belongs to the class-II aminoacyl-tRNA synthetase family. Type 1 subfamily. In terms of assembly, homodimer.

Its subcellular location is the cytoplasm. It carries out the reaction tRNA(Asp) + L-aspartate + ATP = L-aspartyl-tRNA(Asp) + AMP + diphosphate. Its function is as follows. Catalyzes the attachment of L-aspartate to tRNA(Asp) in a two-step reaction: L-aspartate is first activated by ATP to form Asp-AMP and then transferred to the acceptor end of tRNA(Asp). This chain is Aspartate--tRNA ligase, found in Leuconostoc mesenteroides subsp. mesenteroides (strain ATCC 8293 / DSM 20343 / BCRC 11652 / CCM 1803 / JCM 6124 / NCDO 523 / NBRC 100496 / NCIMB 8023 / NCTC 12954 / NRRL B-1118 / 37Y).